Consider the following 356-residue polypeptide: Nicotinate-nucleotide--dimethylbenzimidazole phosphoribosyltransferase (356 aa).

The active-site Proton acceptor is the E317.

This sequence belongs to the CobT family. In terms of assembly, homodimer.

It catalyses the reaction 5,6-dimethylbenzimidazole + nicotinate beta-D-ribonucleotide = alpha-ribazole 5'-phosphate + nicotinate + H(+). Its pathway is nucleoside biosynthesis; alpha-ribazole biosynthesis; alpha-ribazole from 5,6-dimethylbenzimidazole: step 1/2. Its function is as follows. Catalyzes the synthesis of alpha-ribazole-5'-phosphate from nicotinate mononucleotide (NAMN) and 5,6-dimethylbenzimidazole (DMB). This is Nicotinate-nucleotide--dimethylbenzimidazole phosphoribosyltransferase from Salmonella dublin (strain CT_02021853).